Reading from the N-terminus, the 350-residue chain is Holliday junction branch migration complex subunit RuvB (350 aa).

The tract at residues 1–186 (MAGHEEEDER…FGIPLRLDFY (186 aa)) is large ATPase domain (RuvB-L). Residues leucine 25, arginine 26, glycine 67, lysine 70, threonine 71, threonine 72, 133 to 135 (EDF), arginine 176, tyrosine 186, and arginine 223 contribute to the ATP site. Residue threonine 71 coordinates Mg(2+). The segment at 187-257 (ETDELVQIVT…IADAALNRLE (71 aa)) is small ATPAse domain (RuvB-S). The segment at 260–350 (GRGLDAMDRR…VQPDLWSDAP (91 aa)) is head domain (RuvB-H). 3 residues coordinate DNA: arginine 296, arginine 315, and arginine 320.

Belongs to the RuvB family. In terms of assembly, homohexamer. Forms an RuvA(8)-RuvB(12)-Holliday junction (HJ) complex. HJ DNA is sandwiched between 2 RuvA tetramers; dsDNA enters through RuvA and exits via RuvB. An RuvB hexamer assembles on each DNA strand where it exits the tetramer. Each RuvB hexamer is contacted by two RuvA subunits (via domain III) on 2 adjacent RuvB subunits; this complex drives branch migration. In the full resolvosome a probable DNA-RuvA(4)-RuvB(12)-RuvC(2) complex forms which resolves the HJ.

It localises to the cytoplasm. It carries out the reaction ATP + H2O = ADP + phosphate + H(+). Functionally, the RuvA-RuvB-RuvC complex processes Holliday junction (HJ) DNA during genetic recombination and DNA repair, while the RuvA-RuvB complex plays an important role in the rescue of blocked DNA replication forks via replication fork reversal (RFR). RuvA specifically binds to HJ cruciform DNA, conferring on it an open structure. The RuvB hexamer acts as an ATP-dependent pump, pulling dsDNA into and through the RuvAB complex. RuvB forms 2 homohexamers on either side of HJ DNA bound by 1 or 2 RuvA tetramers; 4 subunits per hexamer contact DNA at a time. Coordinated motions by a converter formed by DNA-disengaged RuvB subunits stimulates ATP hydrolysis and nucleotide exchange. Immobilization of the converter enables RuvB to convert the ATP-contained energy into a lever motion, pulling 2 nucleotides of DNA out of the RuvA tetramer per ATP hydrolyzed, thus driving DNA branch migration. The RuvB motors rotate together with the DNA substrate, which together with the progressing nucleotide cycle form the mechanistic basis for DNA recombination by continuous HJ branch migration. Branch migration allows RuvC to scan DNA until it finds its consensus sequence, where it cleaves and resolves cruciform DNA. In Rhodospirillum rubrum (strain ATCC 11170 / ATH 1.1.1 / DSM 467 / LMG 4362 / NCIMB 8255 / S1), this protein is Holliday junction branch migration complex subunit RuvB.